The following is a 216-amino-acid chain: Cytochrome c oxidase subunit 2 (216 aa).

Residues 1–8 (LGLQNATS) are Mitochondrial intermembrane-facing. A helical membrane pass occupies residues 9–39 (PIMEELIAFHDHALMIIFLISSLVLYIISLM). Residues 40-53 (LTTKLTHTSTMNAQ) are Mitochondrial matrix-facing. Residues 54-81 (EIEMIWTILPAVILIMIALPSLRILYMT) traverse the membrane as a helical segment. Topologically, residues 82–216 (DEFNKPYLTL…FIYFQDFEVW (135 aa)) are mitochondrial intermembrane. Cu cation-binding residues include H155, C190, E192, C194, H198, and M201. E192 is a binding site for Mg(2+).

It belongs to the cytochrome c oxidase subunit 2 family. As to quaternary structure, component of the cytochrome c oxidase (complex IV, CIV), a multisubunit enzyme composed of 14 subunits. The complex is composed of a catalytic core of 3 subunits MT-CO1, MT-CO2 and MT-CO3, encoded in the mitochondrial DNA, and 11 supernumerary subunits COX4I, COX5A, COX5B, COX6A, COX6B, COX6C, COX7A, COX7B, COX7C, COX8 and NDUFA4, which are encoded in the nuclear genome. The complex exists as a monomer or a dimer and forms supercomplexes (SCs) in the inner mitochondrial membrane with NADH-ubiquinone oxidoreductase (complex I, CI) and ubiquinol-cytochrome c oxidoreductase (cytochrome b-c1 complex, complex III, CIII), resulting in different assemblies (supercomplex SCI(1)III(2)IV(1) and megacomplex MCI(2)III(2)IV(2)). Found in a complex with TMEM177, COA6, COX18, COX20, SCO1 and SCO2. Interacts with TMEM177 in a COX20-dependent manner. Interacts with COX20. Interacts with COX16. Requires Cu cation as cofactor.

Its subcellular location is the mitochondrion inner membrane. It catalyses the reaction 4 Fe(II)-[cytochrome c] + O2 + 8 H(+)(in) = 4 Fe(III)-[cytochrome c] + 2 H2O + 4 H(+)(out). In terms of biological role, component of the cytochrome c oxidase, the last enzyme in the mitochondrial electron transport chain which drives oxidative phosphorylation. The respiratory chain contains 3 multisubunit complexes succinate dehydrogenase (complex II, CII), ubiquinol-cytochrome c oxidoreductase (cytochrome b-c1 complex, complex III, CIII) and cytochrome c oxidase (complex IV, CIV), that cooperate to transfer electrons derived from NADH and succinate to molecular oxygen, creating an electrochemical gradient over the inner membrane that drives transmembrane transport and the ATP synthase. Cytochrome c oxidase is the component of the respiratory chain that catalyzes the reduction of oxygen to water. Electrons originating from reduced cytochrome c in the intermembrane space (IMS) are transferred via the dinuclear copper A center (CU(A)) of subunit 2 and heme A of subunit 1 to the active site in subunit 1, a binuclear center (BNC) formed by heme A3 and copper B (CU(B)). The BNC reduces molecular oxygen to 2 water molecules using 4 electrons from cytochrome c in the IMS and 4 protons from the mitochondrial matrix. The sequence is that of Cytochrome c oxidase subunit 2 (MT-CO2) from Callimico goeldii (Goeldi's marmoset).